The sequence spans 81 residues: Small ribosomal subunit protein uS17 (81 aa).

Belongs to the universal ribosomal protein uS17 family. In terms of assembly, part of the 30S ribosomal subunit.

In terms of biological role, one of the primary rRNA binding proteins, it binds specifically to the 5'-end of 16S ribosomal RNA. This is Small ribosomal subunit protein uS17 from Methylocella silvestris (strain DSM 15510 / CIP 108128 / LMG 27833 / NCIMB 13906 / BL2).